The primary structure comprises 893 residues: Beta-adaptin-like protein C (893 aa).

The disordered stretch occupies residues 593 to 621 (TEDEDYVEGSETGYPEASGNPVDGAASPS).

Belongs to the adaptor complexes large subunit family. As to quaternary structure, adaptor protein complexes are heterotetramers composed of two large adaptins (beta-type subunit and alpha-type or delta-type or epsilon-type or gamma-type subunit), a medium adaptin (mu-type subunit) and a small adaptin (sigma-type subunit).

Its subcellular location is the golgi apparatus. The protein resides in the trans-Golgi network. The protein localises to the cytoplasmic vesicle. It is found in the clathrin-coated vesicle membrane. Subunit of clathrin-associated adaptor protein complex that plays a role in protein sorting in the late-Golgi/trans-Golgi network (TGN) and/or endosomes. The AP complexes mediate both the recruitment of clathrin to membranes and the recognition of sorting signals within the cytosolic tails of transmembrane cargo molecules. The chain is Beta-adaptin-like protein C (BETAC-AD) from Arabidopsis thaliana (Mouse-ear cress).